The sequence spans 241 residues: tRNA (guanine-N(1)-)-methyltransferase (241 aa).

S-adenosyl-L-methionine-binding positions include G112 and 131 to 136; that span reads LGDFVL.

This sequence belongs to the RNA methyltransferase TrmD family. Homodimer.

Its subcellular location is the cytoplasm. The catalysed reaction is guanosine(37) in tRNA + S-adenosyl-L-methionine = N(1)-methylguanosine(37) in tRNA + S-adenosyl-L-homocysteine + H(+). In terms of biological role, specifically methylates guanosine-37 in various tRNAs. The protein is tRNA (guanine-N(1)-)-methyltransferase of Clostridium novyi (strain NT).